A 239-amino-acid polypeptide reads, in one-letter code: Phosphoribosylaminoimidazole-succinocarboxamide synthase (239 aa).

It belongs to the SAICAR synthetase family.

It carries out the reaction 5-amino-1-(5-phospho-D-ribosyl)imidazole-4-carboxylate + L-aspartate + ATP = (2S)-2-[5-amino-1-(5-phospho-beta-D-ribosyl)imidazole-4-carboxamido]succinate + ADP + phosphate + 2 H(+). It participates in purine metabolism; IMP biosynthesis via de novo pathway; 5-amino-1-(5-phospho-D-ribosyl)imidazole-4-carboxamide from 5-amino-1-(5-phospho-D-ribosyl)imidazole-4-carboxylate: step 1/2. This Brevibacillus brevis (strain 47 / JCM 6285 / NBRC 100599) protein is Phosphoribosylaminoimidazole-succinocarboxamide synthase.